Here is a 273-residue protein sequence, read N- to C-terminus: Rhamnulose-1-phosphate aldolase (273 aa).

The active site involves Glu117. The Zn(2+) site is built by His140, His142, and His211.

It belongs to the aldolase class II family. RhaD subfamily. Zn(2+) serves as cofactor.

The protein localises to the cytoplasm. It carries out the reaction L-rhamnulose 1-phosphate = (S)-lactaldehyde + dihydroxyacetone phosphate. The protein operates within carbohydrate degradation; L-rhamnose degradation; glycerone phosphate from L-rhamnose: step 3/3. Functionally, catalyzes the reversible cleavage of L-rhamnulose-1-phosphate to dihydroxyacetone phosphate (DHAP) and L-lactaldehyde. This is Rhamnulose-1-phosphate aldolase from Listeria monocytogenes serotype 4b (strain CLIP80459).